The sequence spans 97 residues: Putative defensin-like protein 240 (97 aa).

Residues 1–23 (MRYTTSFIVFCFYIFLFTNLVQG) form the signal peptide. 4 disulfide bridges follow: C29-C88, C39-C69, C47-C85, and C67-C87.

Belongs to the DEFL family.

It is found in the secreted. This chain is Putative defensin-like protein 240 (SCRL18), found in Arabidopsis thaliana (Mouse-ear cress).